A 617-amino-acid chain; its full sequence is Proline--tRNA ligase (617 aa).

This sequence belongs to the class-II aminoacyl-tRNA synthetase family. ProS type 1 subfamily. As to quaternary structure, homodimer.

Its subcellular location is the cytoplasm. The catalysed reaction is tRNA(Pro) + L-proline + ATP = L-prolyl-tRNA(Pro) + AMP + diphosphate. Catalyzes the attachment of proline to tRNA(Pro) in a two-step reaction: proline is first activated by ATP to form Pro-AMP and then transferred to the acceptor end of tRNA(Pro). As ProRS can inadvertently accommodate and process non-cognate amino acids such as alanine and cysteine, to avoid such errors it has two additional distinct editing activities against alanine. One activity is designated as 'pretransfer' editing and involves the tRNA(Pro)-independent hydrolysis of activated Ala-AMP. The other activity is designated 'posttransfer' editing and involves deacylation of mischarged Ala-tRNA(Pro). The misacylated Cys-tRNA(Pro) is not edited by ProRS. The polypeptide is Proline--tRNA ligase (Streptococcus pneumoniae (strain P1031)).